A 242-amino-acid polypeptide reads, in one-letter code: uncharacterized protein (242 aa).

Positions 57–67 (SPTSQKTSASG) are enriched in polar residues. The interval 57–78 (SPTSQKTSASGQEEPDPLHDKS) is disordered. The DUF1279 domain occupies 76–188 (DKSSGLIQRF…GYMSTPPPVK (113 aa)). A helical membrane pass occupies residues 92–114 (YGKVMIPVHLLTSTMWFGTFYYA). Residues 188–237 (KEYLQEKMEETKERISGKMEETKDRFSERMEETKDKFNEKLQETKDKVSF) adopt a coiled-coil conformation. Residues 198-236 (TKERISGKMEETKDRFSERMEETKDKFNEKLQETKDKVS) are compositionally biased toward basic and acidic residues. Residues 198–242 (TKERISGKMEETKDRFSERMEETKDKFNEKLQETKDKVSFRKKKE) are disordered.

It localises to the membrane. This is an uncharacterized protein from Danio rerio (Zebrafish).